The sequence spans 406 residues: Type IV pilus assembly protein PilC (406 aa).

A run of 4 helical transmembrane segments spans residues 69–91 (IFSR…LAIL), 171–191 (YPVI…TGIV), 211–231 (FLIA…LLAV), and 377–397 (MIIF…LPLF).

Belongs to the GSP F family. Homotetramer. Interacts with PilB.

Its subcellular location is the cell inner membrane. In terms of biological role, essential inner membrane component of the type IV pilus (T4P) that plays a role in surface and host cell adhesion, colonization, biofilm maturation, virulence, and twitching, a form of surface-associated motility facilitated by cycles of extension, adhesion, and retraction of T4P fibers. Controls both pilus assembly and disassembly and plays an important role in PilB localization to the complex and ATPase activity. The protein is Type IV pilus assembly protein PilC of Thermus thermophilus (strain ATCC 27634 / DSM 579 / HB8).